Reading from the N-terminus, the 566-residue chain is Urease subunit alpha (566 aa).

The Urease domain occupies 129–566 (GGVDTHIHFI…LPLAQRYFLF (438 aa)). Ni(2+) contacts are provided by His-134, His-136, and Lys-217. Lys-217 is subject to N6-carboxylysine. His-219 contacts substrate. Ni(2+) is bound by residues His-246 and His-272. His-320 functions as the Proton donor in the catalytic mechanism. Asp-360 is a binding site for Ni(2+).

Belongs to the metallo-dependent hydrolases superfamily. Urease alpha subunit family. Heterotrimer of UreA (gamma), UreB (beta) and UreC (alpha) subunits. Three heterotrimers associate to form the active enzyme. Ni cation serves as cofactor. Carboxylation allows a single lysine to coordinate two nickel ions.

The protein resides in the cytoplasm. It carries out the reaction urea + 2 H2O + H(+) = hydrogencarbonate + 2 NH4(+). The protein operates within nitrogen metabolism; urea degradation; CO(2) and NH(3) from urea (urease route): step 1/1. This is Urease subunit alpha from Janthinobacterium sp. (strain Marseille) (Minibacterium massiliensis).